A 1189-amino-acid chain; its full sequence is Pesticidal crystal protein Cry1Ca (1189 aa).

It belongs to the delta endotoxin family.

Its function is as follows. Promotes colloidosmotic lysis by binding to the midgut epithelial cells of many lepidopteran larvae including Spodoptera species. The chain is Pesticidal crystal protein Cry1Ca (cry1Ca) from Bacillus thuringiensis subsp. aizawai.